Here is a 337-residue protein sequence, read N- to C-terminus: MTLPPSLRWTGDHLELLDQRRLPEEVSFLKLHQWRDVAEAIATMAVRGAPAIGVAAAWGVVLAAQANEDLDLAVSVLKSSRPTAVNLGWALDRIKASPAAQEPVDPQGLAAVAAALEADDRARTQTLVDHGVGLLASGSRVLHHCHTGAIATAGVGTALGVIAAGHARGVVRHAWLDETRPRLQGAALSAWELGCLGVPCTVIVDGASGLLMRRQEVDAVLVGCDRVAANGDVANKVGTYNLALVARAHGIPFYVCAPGSSMDRSTSDGDAITIEERPQEEITQHRGQRLAAPGAAAWNPAFDITPAHLVTALITEFGVIRPPYRDALQALPLDRQP.

Substrate is bound by residues 47–49 (RGA), Arg-81, and Gln-184. The Proton donor role is filled by Asp-225. A substrate-binding site is contributed by 235 to 236 (NK).

The protein belongs to the eIF-2B alpha/beta/delta subunits family. MtnA subfamily.

The enzyme catalyses 5-(methylsulfanyl)-alpha-D-ribose 1-phosphate = 5-(methylsulfanyl)-D-ribulose 1-phosphate. It participates in amino-acid biosynthesis; L-methionine biosynthesis via salvage pathway; L-methionine from S-methyl-5-thio-alpha-D-ribose 1-phosphate: step 1/6. Functionally, catalyzes the interconversion of methylthioribose-1-phosphate (MTR-1-P) into methylthioribulose-1-phosphate (MTRu-1-P). This Parasynechococcus marenigrum (strain WH8102) protein is Methylthioribose-1-phosphate isomerase.